Here is a 257-residue protein sequence, read N- to C-terminus: Deoxyribose-phosphate aldolase (257 aa).

Catalysis depends on Asp102, which acts as the Proton donor/acceptor. The active-site Schiff-base intermediate with acetaldehyde is the Lys166. Lys198 serves as the catalytic Proton donor/acceptor.

Belongs to the DeoC/FbaB aldolase family. DeoC type 2 subfamily.

It localises to the cytoplasm. It catalyses the reaction 2-deoxy-D-ribose 5-phosphate = D-glyceraldehyde 3-phosphate + acetaldehyde. Its pathway is carbohydrate degradation; 2-deoxy-D-ribose 1-phosphate degradation; D-glyceraldehyde 3-phosphate and acetaldehyde from 2-deoxy-alpha-D-ribose 1-phosphate: step 2/2. Functionally, catalyzes a reversible aldol reaction between acetaldehyde and D-glyceraldehyde 3-phosphate to generate 2-deoxy-D-ribose 5-phosphate. The polypeptide is Deoxyribose-phosphate aldolase (Shewanella woodyi (strain ATCC 51908 / MS32)).